The sequence spans 1207 residues: RNA-binding protein 20 (1207 aa).

A disordered region spans residues Met-1–Leu-58. Positions Pro-43–Pro-54 are enriched in pro residues. A U1-type zinc finger spans residues His-412 to Phe-446. One can recognise an RRM domain in the interval Arg-521–Arg-596. Residues Leu-625 to Arg-637 show a composition bias toward basic and acidic residues. Disordered regions lie at residues Leu-625–Asp-686, Glu-722–Leu-896, and Gln-951–Lys-1110. The segment at Tyr-631–Ser-650 is RS. Ser-638, Ser-640, Ser-643, Ser-645, and Ser-652 each carry phosphoserine. Positions Arg-639–Ser-650 are enriched in low complexity. Over residues Tyr-668 to Asp-686 the composition is skewed to basic and acidic residues. Ser-729 bears the Phosphoserine mark. Basic and acidic residues-rich tracts occupy residues Lys-740–Pro-759, Arg-772–Ser-789, and Glu-796–Glu-836. Ser-789 is modified (phosphoserine). Residues Ala-839–Glu-848 are compositionally biased toward acidic residues. A phosphoserine mark is found at Ser-853 and Ser-864. Residues Ser-853–Ser-863 show a composition bias toward polar residues. Residues Glu-867–Asp-876 show a composition bias toward basic and acidic residues. Ser-879, Ser-881, and Ser-963 each carry phosphoserine. Over residues Val-970 to Asn-979 the composition is skewed to polar residues. Ser-999 is modified (phosphoserine). Positions Tyr-1011 to Asp-1022 are enriched in basic and acidic residues. Residues Ser-1034, Ser-1046, Ser-1057, Ser-1066, Ser-1078, Ser-1096, and Ser-1101 each carry the phosphoserine modification. A compositionally biased stretch (basic and acidic residues) spans Asp-1050–Ala-1072. A compositionally biased stretch (polar residues) spans Ser-1073–Pro-1102. The Matrin-type zinc finger occupies Phe-1141–Lys-1172. A disordered region spans residues Gly-1181 to Leu-1207. Phosphoserine is present on residues Ser-1190 and Ser-1192.

In terms of assembly, associates with components of the U1 and U2 U1 small nuclear ribonucleoprotein complexes. In terms of processing, phosphorylation regulates the subcellular localization. Phosphorylation of Ser-638 and Ser-640 in the RS (arginine/serine-rich) region promotes nuclear localization of the protein. In contrast, phosphorylation of the C-terminal disordered region promotes localization to cytoplasmic ribonucleoprotein granules.

The protein localises to the nucleus. It is found in the cytoplasm. The protein resides in the cytoplasmic ribonucleoprotein granule. Functionally, RNA-binding protein that acts as a regulator of mRNA splicing of a subset of genes encoding key structural proteins involved in cardiac development, such as TTN (Titin), CACNA1C, CAMK2D or PDLIM5/ENH. Acts as a repressor of mRNA splicing: specifically binds the 5'UCUU-3' motif that is predominantly found within intronic sequences of pre-mRNAs, leading to the exclusion of specific exons in target transcripts. RBM20-mediated exon skipping is hormone-dependent and is essential for TTN isoform transition in both cardiac and skeletal muscles. RBM20-mediated exon skipping of TTN provides substrates for the formation of circular RNA (circRNAs) from the TTN transcripts. Together with RBM24, promotes the expression of short isoforms of PDLIM5/ENH in cardiomyocytes. The chain is RNA-binding protein 20 from Rattus norvegicus (Rat).